Here is a 216-residue protein sequence, read N- to C-terminus: Uracil phosphoribosyltransferase (216 aa).

GTP-binding positions include Arg-32, Arg-41, 75–78 (LGKI), and Lys-77. Arg-85 contacts 5-phospho-alpha-D-ribose 1-diphosphate. Position 102 (Arg-102) interacts with GTP. Arg-110 serves as a coordination point for 5-phospho-alpha-D-ribose 1-diphosphate. Arg-131 is a binding site for GTP. Residues Asp-137 and 137–145 (DPMLATGGS) each bind 5-phospho-alpha-D-ribose 1-diphosphate. Tyr-201 contributes to the D-ribose 5-phosphate binding site. Uracil is bound by residues Leu-202 and 207–209 (GDF). Asp-208 lines the 5-phospho-alpha-D-ribose 1-diphosphate pocket.

This sequence belongs to the UPRTase family. It depends on Mg(2+) as a cofactor.

The catalysed reaction is UMP + diphosphate = 5-phospho-alpha-D-ribose 1-diphosphate + uracil. Its pathway is pyrimidine metabolism; UMP biosynthesis via salvage pathway; UMP from uracil: step 1/1. Allosterically activated by GTP. In terms of biological role, catalyzes the conversion of uracil and 5-phospho-alpha-D-ribose 1-diphosphate (PRPP) to UMP and diphosphate. The polypeptide is Uracil phosphoribosyltransferase (FUR1) (Lachancea kluyveri (Yeast)).